Here is a 250-residue protein sequence, read N- to C-terminus: Probable aquaporin TIP-type (250 aa).

2 consecutive transmembrane segments (helical) span residues Ala-22 to Ile-42 and Ala-56 to Gly-76. An NPA 1 motif is present at residues Asn-85–Ala-87. 3 helical membrane passes run Ile-104 to Val-124, Val-138 to Val-158, and Ile-170 to Gly-190. The NPA 2 motif lies at Asn-198–Ala-200. A helical transmembrane segment spans residues Tyr-218–Ile-238.

The protein belongs to the MIP/aquaporin (TC 1.A.8) family. TIP (TC 1.A.8.10) subfamily.

It localises to the membrane. In terms of biological role, aquaporins facilitate the transport of water and small neutral solutes across cell membranes. May have a role in buffering osmotic fluctations in the highly compartmented vacuole of arbuscule cells. The chain is Probable aquaporin TIP-type (AQP1) from Medicago truncatula (Barrel medic).